The sequence spans 138 residues: Thyrotropin subunit beta (138 aa).

The N-terminal stretch at 1–20 (MTAIFLMSMLFGLACGQAMS) is a signal peptide. 6 cysteine pairs are disulfide-bonded: Cys-22/Cys-72, Cys-36/Cys-87, Cys-39/Cys-125, Cys-47/Cys-103, Cys-51/Cys-105, and Cys-108/Cys-115. Asn-43 carries an N-linked (GlcNAc...) asparagine glycan. Positions 133–138 (VLEFSI) are excised as a propeptide.

The protein belongs to the glycoprotein hormones subunit beta family. As to quaternary structure, heterodimer of a common alpha chain and a unique beta chain which confers biological specificity to thyrotropin, lutropin, follitropin and gonadotropin.

It is found in the secreted. Indispensable for the control of thyroid structure and metabolism. The chain is Thyrotropin subunit beta (TSHB) from Sus scrofa (Pig).